The following is a 228-amino-acid chain: PKHD-type hydroxylase XC_1340 (228 aa).

One can recognise a Fe2OG dioxygenase domain in the interval 78 to 180; sequence RIYPPLFNRY…RVASFFWIQS (103 aa). The Fe cation site is built by histidine 96, aspartate 98, and histidine 161. Arginine 171 is a binding site for 2-oxoglutarate.

Fe(2+) serves as cofactor. Requires L-ascorbate as cofactor.

This chain is PKHD-type hydroxylase XC_1340, found in Xanthomonas campestris pv. campestris (strain 8004).